Here is a 346-residue protein sequence, read N- to C-terminus: Fe(3+) ions import ATP-binding protein FbpC 2 (346 aa).

An ABC transporter domain is found at 5 to 235 (LEVDGVDKSF…PVDVPTAEFI (231 aa)). 37 to 44 (GPSGCGKT) lines the ATP pocket.

It belongs to the ABC transporter superfamily. Fe(3+) ion importer (TC 3.A.1.10) family. As to quaternary structure, the complex is composed of two ATP-binding proteins (FbpC), two transmembrane proteins (FbpB) and a solute-binding protein (FbpA).

Its subcellular location is the cell membrane. The catalysed reaction is Fe(3+)(out) + ATP + H2O = Fe(3+)(in) + ADP + phosphate + H(+). In terms of biological role, part of the ABC transporter complex FbpABC involved in Fe(3+) ions import. Responsible for energy coupling to the transport system. The polypeptide is Fe(3+) ions import ATP-binding protein FbpC 2 (Rhodococcus jostii (strain RHA1)).